A 400-amino-acid chain; its full sequence is Cytohesin-2 (400 aa).

Residues Asp10–Arg63 are a coiled coil. Residues Phe72–Asn201 form the SEC7 domain. Positions Asn259–Ser376 constitute a PH domain. A 1,2-diacyl-sn-glycero-3-phospho-(1D-myo-inositol-3,4,5-trisphosphate) contacts are provided by residues Lys268–Thr276, Arg280, Tyr291, Arg301, Lys339, Asn350, and His351. Positions Arg387–Lys395 are C-terminal autoinhibitory region.

In terms of assembly, heteromer. Composed of TAMALIN, CYTH2 and at least one GRM1. Interacts with ARRB1. Interacts with ARL4D; the interaction is direct. Directly interacts with CCDC120 through the coiled coil domain; this interaction stabilizes CCDC120, possibly by preventing its ubiquitination, and is required for neurite growth in neuroblastoma cells. Interacts with ARF1. Interacts with FRMD4A. Interacts (via N-terminal domain) with INAVA (via N-terminal domain). In terms of tissue distribution, widely expressed.

Its subcellular location is the cell membrane. It localises to the cytoplasm. The protein resides in the cell projection. It is found in the growth cone. The protein localises to the cell junction. Its subcellular location is the tight junction. It localises to the adherens junction. Its function is as follows. Acts as a guanine-nucleotide exchange factor (GEF). Promotes guanine-nucleotide exchange on ARF1, ARF3 and ARF6. Activates ARF factors through replacement of GDP with GTP. The cell membrane form, in association with ARL4 proteins, recruits ARF6 to the plasma membrane. Involved in neurite growth. This chain is Cytohesin-2, found in Homo sapiens (Human).